Here is a 546-residue protein sequence, read N- to C-terminus: Inosine-5'-monophosphate dehydrogenase (546 aa).

CBS domains follow at residues 135–197 and 198–254; these read FILD…VTAI and MSTD…PLAS. NAD(+) contacts are provided by residues 292-294 and 342-344; these read DSS and GMG. The K(+) site is built by Gly344 and Gly346. Ser347 serves as a coordination point for IMP. K(+) is bound at residue Cys349. Catalysis depends on Cys349, which acts as the Thioimidate intermediate. IMP is bound by residues 382-384, 405-406, and 430-434; these read DGG, GG, and YRGMG. Residue Arg460 is the Proton acceptor of the active site. Gln472 is an IMP binding site. Glu531 and Gly532 together coordinate K(+).

It belongs to the IMPDH/GMPR family. In terms of assembly, homotetramer. It depends on K(+) as a cofactor.

The protein resides in the cytoplasm. It carries out the reaction IMP + NAD(+) + H2O = XMP + NADH + H(+). It participates in purine metabolism; XMP biosynthesis via de novo pathway; XMP from IMP: step 1/1. With respect to regulation, mycophenolic acid (MPA) is a non-competitive inhibitor that prevents formation of the closed enzyme conformation by binding to the same site as the amobile flap. In contrast, mizoribine monophosphate (MZP) is a competitive inhibitor that induces the closed conformation. MPA is a potent inhibitor of mammalian IMPDHs but a poor inhibitor of the bacterial enzymes. MZP is a more potent inhibitor of bacterial IMPDH. Functionally, catalyzes the conversion of inosine 5'-phosphate (IMP) to xanthosine 5'-phosphate (XMP), the first committed and rate-limiting step in the de novo synthesis of guanine nucleotides, and therefore plays an important role in the regulation of cell growth. The protein is Inosine-5'-monophosphate dehydrogenase of Aspergillus fumigatus (strain ATCC MYA-4609 / CBS 101355 / FGSC A1100 / Af293) (Neosartorya fumigata).